The chain runs to 31 residues: Cytochrome b6-f complex subunit 6 (31 aa).

The helical transmembrane segment at 4–24 (ITSYFGFLLAALTITSVLFIG) threads the bilayer.

It belongs to the PetL family. In terms of assembly, the 4 large subunits of the cytochrome b6-f complex are cytochrome b6, subunit IV (17 kDa polypeptide, PetD), cytochrome f and the Rieske protein, while the 4 small subunits are PetG, PetL, PetM and PetN. The complex functions as a dimer.

It localises to the plastid. It is found in the chloroplast thylakoid membrane. Functionally, component of the cytochrome b6-f complex, which mediates electron transfer between photosystem II (PSII) and photosystem I (PSI), cyclic electron flow around PSI, and state transitions. PetL is important for photoautotrophic growth as well as for electron transfer efficiency and stability of the cytochrome b6-f complex. This is Cytochrome b6-f complex subunit 6 from Arabidopsis thaliana (Mouse-ear cress).